The chain runs to 213 residues: Orotate phosphoribosyltransferase (213 aa).

Residue lysine 26 participates in 5-phospho-alpha-D-ribose 1-diphosphate binding. 34-35 contributes to the orotate binding site; it reads FF. 5-phospho-alpha-D-ribose 1-diphosphate is bound by residues 72 to 73, arginine 99, lysine 100, lysine 103, histidine 105, and 124 to 132; these read YK and DDVITAGTA. 2 residues coordinate orotate: threonine 128 and arginine 156.

The protein belongs to the purine/pyrimidine phosphoribosyltransferase family. PyrE subfamily. Homodimer. The cofactor is Mg(2+).

It catalyses the reaction orotidine 5'-phosphate + diphosphate = orotate + 5-phospho-alpha-D-ribose 1-diphosphate. Its pathway is pyrimidine metabolism; UMP biosynthesis via de novo pathway; UMP from orotate: step 1/2. Functionally, catalyzes the transfer of a ribosyl phosphate group from 5-phosphoribose 1-diphosphate to orotate, leading to the formation of orotidine monophosphate (OMP). This chain is Orotate phosphoribosyltransferase, found in Salmonella choleraesuis (strain SC-B67).